We begin with the raw amino-acid sequence, 234 residues long: MNQRINSYKMFGHNPKRSILSGDGTKLEVQSIFKTIQGEGIFVGYPSIFIRLGGCNLACNFCDTEFEDFKLIDIDQILNKVKNLSLNSKNAKTINLVVITGGEPMRQPIGLLCQKLLDQDFKVQIETNGTLYRSLPKEVFIVCSPKVGKTGYNKIREDLLPQISAVKFIISKNIVEYSIIPEVGQSAYDIPVFVQSMDQNDKRLNNENNELAVKLALESGARLSLQTHKFLGIE.

Substrate contacts are provided by residues 36-38 (IQG) and arginine 51. Positions 42-234 (FVGYPSIFIR…LQTHKFLGIE (193 aa)) constitute a Radical SAM core domain. [4Fe-4S] cluster-binding residues include cysteine 55, cysteine 59, and cysteine 62. Residue threonine 64 coordinates Mg(2+). Threonine 100 lines the substrate pocket. Residues glycine 102, 144–146 (SPK), and 195–198 (QSMD) contribute to the S-adenosyl-L-methionine site.

The protein belongs to the radical SAM superfamily. 7-carboxy-7-deazaguanine synthase family. As to quaternary structure, homodimer. It depends on [4Fe-4S] cluster as a cofactor. S-adenosyl-L-methionine is required as a cofactor. Mg(2+) serves as cofactor.

The enzyme catalyses 6-carboxy-5,6,7,8-tetrahydropterin + H(+) = 7-carboxy-7-deazaguanine + NH4(+). It participates in purine metabolism; 7-cyano-7-deazaguanine biosynthesis. Its function is as follows. Catalyzes the complex heterocyclic radical-mediated conversion of 6-carboxy-5,6,7,8-tetrahydropterin (CPH4) to 7-carboxy-7-deazaguanine (CDG), a step common to the biosynthetic pathways of all 7-deazapurine-containing compounds. The sequence is that of 7-carboxy-7-deazaguanine synthase from Rickettsia prowazekii (strain Madrid E).